Here is a 167-residue protein sequence, read N- to C-terminus: Leptin (167 aa).

Residues 1–21 (MYWRTLWGFLWLWPYLFYIQA) form the signal peptide. Residues Cys117 and Cys167 are joined by a disulfide bond.

This sequence belongs to the leptin family.

Its subcellular location is the secreted. Functionally, key player in the regulation of energy balance and body weight control. Once released into the circulation, has central and peripheral effects by binding LEPR, found in many tissues, which results in the activation of several major signaling pathways. In the hypothalamus, acts as an appetite-regulating factor that induces a decrease in food intake and an increase in energy consumption by inducing anorexinogenic factors and suppressing orexigenic neuropeptides, also regulates bone mass and secretion of hypothalamo-pituitary-adrenal hormones. In the periphery, increases basal metabolism, influences reproductive function, regulates pancreatic beta-cell function and insulin secretion, is pro-angiogenic for endothelial cell and affects innate and adaptive immunity. In the arcuate nucleus of the hypothalamus, activates by depolarization POMC neurons inducing FOS and SOCS3 expression to release anorexigenic peptides and inhibits by hyperpolarization NPY neurons inducing SOCS3 with a consequent reduction on release of orexigenic peptides. In addition to its known satiety inducing effect, has a modulatory role in nutrient absorption. In the intestine, reduces glucose absorption by enterocytes by activating PKC and leading to a sequential activation of p38, PI3K and ERK signaling pathways which exerts an inhibitory effect on glucose absorption. Acts as a growth factor on certain tissues, through the activation of different signaling pathways increases expression of genes involved in cell cycle regulation such as CCND1, via JAK2-STAT3 pathway, or VEGFA, via MAPK1/3 and PI3K-AKT1 pathways. May also play an apoptotic role via JAK2-STAT3 pathway and up-regulation of BIRC5 expression. Pro-angiogenic, has mitogenic activity on vascular endothelial cells and plays a role in matrix remodeling by regulating the expression of matrix metalloproteinases (MMPs) and tissue inhibitors of metalloproteinases (TIMPs). In innate immunity, modulates the activity and function of neutrophils by increasing chemotaxis and the secretion of oxygen radicals. Increases phagocytosis by macrophages and enhances secretion of pro-inflammatory mediators. Increases cytotoxic ability of NK cells. Plays a pro-inflammatory role, in synergy with IL1B, by inducing NOS2 which promotes the production of IL6, IL8 and Prostaglandin E2, through a signaling pathway that involves JAK2, PI3K, MAP2K1/MEK1 and MAPK14/p38. In adaptive immunity, promotes the switch of memory T-cells towards T helper-1 cell immune responses. Increases CD4(+)CD25(-) T-cell proliferation and reduces autophagy during TCR (T-cell receptor) stimulation, through MTOR signaling pathway activation and BCL2 up-regulation. The polypeptide is Leptin (LEP) (Macaca mulatta (Rhesus macaque)).